The following is a 419-amino-acid chain: L-rhamnose isomerase (419 aa).

Residues histidine 262, aspartate 294, and aspartate 296 each coordinate Mn(2+).

It belongs to the rhamnose isomerase family. Homotetramer. The cofactor is Mn(2+).

The protein resides in the cytoplasm. The enzyme catalyses L-rhamnopyranose = L-rhamnulose. The protein operates within carbohydrate degradation; L-rhamnose degradation; glycerone phosphate from L-rhamnose: step 1/3. Catalyzes the interconversion of L-rhamnose and L-rhamnulose. This chain is L-rhamnose isomerase, found in Escherichia coli O45:K1 (strain S88 / ExPEC).